A 203-amino-acid polypeptide reads, in one-letter code: NADH-quinone oxidoreductase subunit C (203 aa).

This sequence belongs to the complex I 30 kDa subunit family. As to quaternary structure, NDH-1 is composed of 14 different subunits. Subunits NuoB, C, D, E, F, and G constitute the peripheral sector of the complex.

It is found in the cell inner membrane. The catalysed reaction is a quinone + NADH + 5 H(+)(in) = a quinol + NAD(+) + 4 H(+)(out). Its function is as follows. NDH-1 shuttles electrons from NADH, via FMN and iron-sulfur (Fe-S) centers, to quinones in the respiratory chain. The immediate electron acceptor for the enzyme in this species is believed to be ubiquinone. Couples the redox reaction to proton translocation (for every two electrons transferred, four hydrogen ions are translocated across the cytoplasmic membrane), and thus conserves the redox energy in a proton gradient. This Delftia acidovorans (strain DSM 14801 / SPH-1) protein is NADH-quinone oxidoreductase subunit C.